The primary structure comprises 134 residues: Profilin-2 (134 aa).

Cys13 and Cys118 are disulfide-bonded. The short motif at Ala84–Thr100 is the Involved in PIP2 interaction element. Thr114 is modified (phosphothreonine).

Belongs to the profilin family. Occurs in many kinds of cells as a complex with monomeric actin in a 1:1 ratio. Post-translationally, phosphorylated by MAP kinases.

The protein resides in the cytoplasm. It is found in the cytoskeleton. Its function is as follows. Binds to actin and affects the structure of the cytoskeleton. At high concentrations, profilin prevents the polymerization of actin, whereas it enhances it at low concentrations. This chain is Profilin-2, found in Olea europaea (Common olive).